The following is a 365-amino-acid chain: Protein YIM1 (365 aa).

This sequence belongs to the YIM1 family.

Its subcellular location is the lipid droplet. The protein localises to the mitochondrion. This chain is Protein YIM1 (YIM1), found in Saccharomyces cerevisiae (strain RM11-1a) (Baker's yeast).